The sequence spans 397 residues: Acetate kinase (397 aa).

Residue Asn-7 participates in Mg(2+) binding. Lys-14 is a binding site for ATP. Position 90 (Arg-90) interacts with substrate. Catalysis depends on Asp-147, which acts as the Proton donor/acceptor. ATP-binding positions include 207–211 (HLGNG), 282–284 (DFR), and 330–334 (GLGEN). Position 383 (Glu-383) interacts with Mg(2+).

Belongs to the acetokinase family. As to quaternary structure, homodimer. Mg(2+) is required as a cofactor. It depends on Mn(2+) as a cofactor.

The protein resides in the cytoplasm. It catalyses the reaction acetate + ATP = acetyl phosphate + ADP. It functions in the pathway metabolic intermediate biosynthesis; acetyl-CoA biosynthesis; acetyl-CoA from acetate: step 1/2. In terms of biological role, catalyzes the formation of acetyl phosphate from acetate and ATP. Can also catalyze the reverse reaction. In Clostridium botulinum (strain Langeland / NCTC 10281 / Type F), this protein is Acetate kinase.